We begin with the raw amino-acid sequence, 992 residues long: MNYAKLSIAFSKKTIKTHNCRLFQRWLHVGDKVHDFRVVDTKKVPELQLNYTRLKHEPTNADMIHLDREDPNSVFSIGFQTPAENDEGIPHILEHTTLCGSNKYPVRDPFFKMLNRSLATFMNAFTASDFTFYPFATVNTTDYKNLRDVYLDATLFPKLRKLDFLQEGWRFEHADVNDKKSPIIFNGVVYNEMKGQVSDSSYIFYMLFQQHLFQGTAYGFNSGGDPLAIPDLKYEELVKFHRSHYHPSNAKILSYGSFPLEDNLSALSETFRPFSKRELNLPNTFLKEFDQEKRVVEYGPLDPVMAPGRQVKTSISFLANDTSNVYETFALKVLSKLCFDGFSSPFYKALIESGLGTDFAPNSGYDSTTKRGIFSVGLEGASEESLAKIENLVYSIFNDLALKGFENEKLEAILHQMEISLKHKSAHFGIGLAQSLPFNWFNGADPADWLSFNKQIEWLKQKNSDGKLFQKLIKKYILENKSRFVFTMLPSSTFPQRLQEAEAKKLQERTSKLTDEDIAEIEKTSVKLLEAQSTPADTSCLPTLSVSDIPETIDETKLKFLDIAGMKAQWYDLAAGLTYIRLLLPLKNFPESLIPYLPVYCDACLNLGTHSESIGDLEHQIRRYTGGISISPSAVTNNSDVSKYELGIAISGYALDKNVGKLVELINKAFWNTNLSNTDKLAIMLKTSVSGITDGIAEKGHSFAKVSSASGLTEKTSITEQLGGLTQVKLLSQLSREESFGPLVEKLTAIREILRGTSGFKAAINASPTQHEVVEKALQKFMKSRGVNQQTQTKSTSKERNGINSIKTYHELPFQTYFAAKSCLGVPYTHPDGAPLQILSSLLTHKYLHGEIREKGGAYGAGLSYSGIDGVLSFFTYRDSDPIRSLSVFDEASEWATTHEFSQRDIDEAKLAVFQGIDSPVSESQKGMLYFVDGVTDEMLQNRRKQLLNVSANDLKAVAKKYLVNPKKSYTAVLGPKSEKQLPTWVIDKFES.

A mitochondrion-targeting transit peptide spans Met-1–Gly-30. His-91 lines the Zn(2+) pocket. The active-site Proton acceptor is the Glu-94. His-95 is a binding site for Zn(2+). The active site involves Glu-167. Position 192 (Glu-192) interacts with Zn(2+).

Belongs to the peptidase M16 family. PreP subfamily. As to quaternary structure, monomer and homodimer; homodimerization is induced by binding of the substrate. Zn(2+) is required as a cofactor.

Its subcellular location is the mitochondrion intermembrane space. The protein resides in the mitochondrion matrix. Functionally, degrades mitochondrial transit peptides after their cleavage in the intermembrane space or in the matrix, and presequence peptides; clearance of these peptides is required to keep the presequence processing machinery running. Preferentially cleaves the N-terminal side of paired basic amino acid residues. Also degrades other unstructured peptides. May function as an ATP-dependent peptidase as opposed to a metalloendopeptidase. This is Presequence protease, mitochondrial (cym1) from Schizosaccharomyces pombe (strain 972 / ATCC 24843) (Fission yeast).